The following is a 387-amino-acid chain: Protein RecA (387 aa).

80-87 contributes to the ATP binding site; that stretch reads GPESSGKT. Residues 348–387 form a disordered region; sequence LDDSEVAETEEETTASKTKAKAKKEEKXVETEEIELELQD. 2 stretches are compositionally biased toward acidic residues: residues 349–360 and 378–387; these read DDSEVAETEEET and TEEIELELQD.

The protein belongs to the RecA family.

It is found in the cytoplasm. Functionally, can catalyze the hydrolysis of ATP in the presence of single-stranded DNA, the ATP-dependent uptake of single-stranded DNA by duplex DNA, and the ATP-dependent hybridization of homologous single-stranded DNAs. It interacts with LexA causing its activation and leading to its autocatalytic cleavage. The sequence is that of Protein RecA from Lactococcus lactis subsp. cremoris (Streptococcus cremoris).